Here is a 494-residue protein sequence, read N- to C-terminus: DDB1- and CUL4-associated factor 4 (494 aa).

The tract at residues 1 to 65 (MHQSSWKSRR…AGSSSVPDLP (65 aa)) is disordered. Over residues 7–20 (KSRRHRRRGHRHSA) the composition is skewed to basic residues. Over residues 51–60 (STSSTAGSSS) the composition is skewed to low complexity. 2 WD repeats span residues 367 to 406 (FHDSAVTSVQILQEEQCLMASDMAGTIKLWDLRTTKCIRQ) and 409 to 450 (GHVN…LLRT).

In terms of assembly, interacts with DDB1 and CUL4A.

It functions in the pathway protein modification; protein ubiquitination. Functionally, may function as a substrate receptor for CUL4-DDB1 E3 ubiquitin-protein ligase complex. The chain is DDB1- and CUL4-associated factor 4 (DCAF4) from Bos taurus (Bovine).